A 488-amino-acid chain; its full sequence is GTPase Der (488 aa).

EngA-type G domains lie at Pro-3–Met-166 and Ile-199–Thr-372. Residues Gly-9–Ser-16, Asp-56–Ile-60, Asn-118–Asp-121, Gly-205–Ser-212, Asp-252–Val-256, and Asn-317–Asp-320 contribute to the GTP site. A KH-like domain is found at Arg-373–Asp-457. The disordered stretch occupies residues Met-469–Lys-488. Over residues Arg-473–Lys-488 the composition is skewed to basic residues.

The protein belongs to the TRAFAC class TrmE-Era-EngA-EngB-Septin-like GTPase superfamily. EngA (Der) GTPase family. Associates with the 50S ribosomal subunit.

Its function is as follows. GTPase that plays an essential role in the late steps of ribosome biogenesis. The polypeptide is GTPase Der (Shewanella sp. (strain W3-18-1)).